A 563-amino-acid chain; its full sequence is NAD-dependent malic enzyme (563 aa).

Tyr101 acts as the Proton donor in catalysis. Arg154 contributes to the NAD(+) binding site. The active-site Proton acceptor is Lys172. Positions 243, 244, and 267 each coordinate a divalent metal cation. Positions 267 and 416 each coordinate NAD(+).

Belongs to the malic enzymes family. Homotetramer. Mg(2+) serves as cofactor. The cofactor is Mn(2+).

It catalyses the reaction (S)-malate + NAD(+) = pyruvate + CO2 + NADH. It carries out the reaction oxaloacetate + H(+) = pyruvate + CO2. The sequence is that of NAD-dependent malic enzyme from Pseudomonas syringae pv. tomato (strain ATCC BAA-871 / DC3000).